An 80-amino-acid polypeptide reads, in one-letter code: uncharacterized protein (80 aa).

The first 15 residues, 1–15 (MEVIVVIVVIVVVIA), serve as a signal peptide directing secretion. Low complexity predominate over residues 23-44 (NSNSNSNNSSDSSNESNNSDSS). The tract at residues 23-52 (NSNSNSNNSSDSSNESNNSDSSKNGGSDIY) is disordered. Residues Asn29, Asn30, Asn36, Asn39, and Asn64 are each glycosylated (N-linked (GlcNAc...) asparagine).

It localises to the secreted. This is an uncharacterized protein from Dictyostelium discoideum (Social amoeba).